The primary structure comprises 125 residues: Protein U2 (125 aa).

It belongs to the nanovirus U2 protein family.

The polypeptide is Protein U2 (DNA-U2) (Milk vetch dwarf virus (isolate N) (MDV)).